The sequence spans 433 residues: Putative ankyrin repeat protein R784 (433 aa).

10 ANK repeats span residues 44-70 (NQNL…KTDV), 71-101 (NGLK…NNDL), 102-131 (LDLH…IVII), 179-205 (FYDS…NQCS), 206-235 (VRQK…RIFS), 237-264 (RRLI…IDLA), 265-294 (QNNF…DIHF), 296-321 (NGEC…NKVY), 322-351 (MSEK…ACMS), and 380-409 (NMRK…KLRE).

The sequence is that of Putative ankyrin repeat protein R784 from Acanthamoeba polyphaga mimivirus (APMV).